Consider the following 211-residue polypeptide: Homeobox protein Rhox5 (211 aa).

Residues 38 to 129 form a disordered region; it reads FFQAGEGRDE…PLRRPGSTQR (92 aa). Composition is skewed to gly residues over residues 52–62 and 70–84; these read GQPGEGAVGTE and GGEG…GPVG. Basic and acidic residues predominate over residues 102 to 119; that stretch reads HEPVAEGTESVKSEDKQM. The homeobox; atypical DNA-binding region spans 119–176; it reads MPLRRPGSTQRRLAELERILLSSGSSSGGRSLIDGWISVCPECRNWFKIRRAAYRRNR.

As to expression, highly expressed in placenta. Lower levels in testis, epididymis, ovary and skeletal muscle.

It is found in the nucleus. Functionally, transcription factor required for differentiation of embryonic stem cells (ESCs) into primordial germ cells. In Rattus norvegicus (Rat), this protein is Homeobox protein Rhox5 (Rhox5).